Consider the following 114-residue polypeptide: Large ribosomal subunit protein P2v (114 aa).

The disordered stretch occupies residues 74–114 (VASGGGGGAAPAAEPASVESKKKEEEKEESEDDGGMMSLFD). Phosphoserine is present on S103.

This sequence belongs to the eukaryotic ribosomal protein P1/P2 family. P1 and P2 exist as dimers at the large ribosomal subunit. In terms of processing, phosphorylated.

Its function is as follows. Plays an important role in the elongation step of protein synthesis. In Arabidopsis thaliana (Mouse-ear cress), this protein is Large ribosomal subunit protein P2v (RPP2E).